A 317-amino-acid chain; its full sequence is MKI67 FHA domain-interacting nucleolar phosphoprotein (317 aa).

At Ala-2 the chain carries N-acetylalanine. Lys-40 is covalently cross-linked (Glycyl lysine isopeptide (Lys-Gly) (interchain with G-Cter in SUMO2)). Residues 47–125 (GVVYLGHLPS…RLLSCKFMPR (79 aa)) enclose the RRM domain. The residue at position 116 (Arg-116) is an Omega-N-methylarginine. Residues Lys-181 and Lys-194 each participate in a glycyl lysine isopeptide (Lys-Gly) (interchain with G-Cter in SUMO2) cross-link. The residue at position 203 (Arg-203) is a Citrulline. The segment at 203-317 (RDSEGNQVLP…KRPRKRKSKQ (115 aa)) is disordered. Positions 213–233 (DQKEGLSGEPRRKEKMMKEDI) are enriched in basic and acidic residues. Ser-219 is modified (phosphoserine). Positions 238–248 (PKKRKRSRRKK) are enriched in basic residues. Phosphoserine is present on Ser-253. 2 positions are modified to phosphothreonine: Thr-257 and Thr-261. Over residues 265–284 (LERRKSQVMEVGGDKDDEII) the composition is skewed to basic and acidic residues. Omega-N-methylated arginine occurs at positions 267 and 268. Ser-270 carries the post-translational modification Phosphoserine. Lys-293 participates in a covalent cross-link: Glycyl lysine isopeptide (Lys-Gly) (interchain with G-Cter in SUMO1); alternate. Lys-293 is covalently cross-linked (Glycyl lysine isopeptide (Lys-Gly) (interchain with G-Cter in SUMO2); alternate). Thr-301 carries the phosphothreonine modification. Positions 308–317 (KRPRKRKSKQ) are enriched in basic residues.

As to quaternary structure, binds to the FHA domain of MKI67; this interaction is enhanced in mitosis. In terms of processing, phosphorylated. Post-translationally, citrullinated by PADI4. In terms of tissue distribution, expressed in brain, heart, hind limb muscles, intestine, liver, skin and spleen.

The protein localises to the nucleus. Its subcellular location is the nucleolus. The protein resides in the chromosome. This Mus musculus (Mouse) protein is MKI67 FHA domain-interacting nucleolar phosphoprotein (Nifk).